Here is a 283-residue protein sequence, read N- to C-terminus: Putative cuticle collagen 79 (283 aa).

The disordered stretch occupies residues 59-283 (FKQQSSPPSP…ARSISKVAIQ (225 aa)). 3 triple-helical region regions span residues 94–122 (GPPG…ENGG), 139–201 (GPRG…PGRK), and 204–269 (GEAG…DGAY). Positions 137-146 (PPGPRGPPGP) are enriched in pro residues. Over residues 226 to 240 (TDGDDGVDGQPGDEG) the composition is skewed to acidic residues. Positions 253 to 265 (PQGEQGTEGQPGT) are enriched in low complexity.

Belongs to the cuticular collagen family. As to quaternary structure, collagen polypeptide chains are complexed within the cuticle by disulfide bonds and other types of covalent cross-links.

In terms of biological role, nematode cuticles are composed largely of collagen-like proteins. The cuticle functions both as an exoskeleton and as a barrier to protect the worm from its environment. This is Putative cuticle collagen 79 (col-79) from Caenorhabditis elegans.